Consider the following 397-residue polypeptide: Tryptophan synthase beta chain (397 aa).

An N6-(pyridoxal phosphate)lysine modification is found at Lys-87.

Belongs to the TrpB family. In terms of assembly, tetramer of two alpha and two beta chains. It depends on pyridoxal 5'-phosphate as a cofactor.

The enzyme catalyses (1S,2R)-1-C-(indol-3-yl)glycerol 3-phosphate + L-serine = D-glyceraldehyde 3-phosphate + L-tryptophan + H2O. It functions in the pathway amino-acid biosynthesis; L-tryptophan biosynthesis; L-tryptophan from chorismate: step 5/5. The beta subunit is responsible for the synthesis of L-tryptophan from indole and L-serine. In Escherichia fergusonii (strain ATCC 35469 / DSM 13698 / CCUG 18766 / IAM 14443 / JCM 21226 / LMG 7866 / NBRC 102419 / NCTC 12128 / CDC 0568-73), this protein is Tryptophan synthase beta chain.